Consider the following 737-residue polypeptide: Phosphoribosylformylglycinamidine synthase subunit PurL (737 aa).

His50 is a catalytic residue. ATP-binding residues include Tyr53 and Lys92. Glu94 contributes to the Mg(2+) binding site. Residues 95–98 (SHNH) and Arg117 each bind substrate. His96 functions as the Proton acceptor in the catalytic mechanism. Asp118 is a Mg(2+) binding site. Gln241 serves as a coordination point for substrate. Asp269 is a Mg(2+) binding site. 313-315 (ESQ) contributes to the substrate binding site. 2 residues coordinate ATP: Asp494 and Gly531. Asn532 provides a ligand contact to Mg(2+). Ser534 contributes to the substrate binding site.

It belongs to the FGAMS family. Monomer. Part of the FGAM synthase complex composed of 1 PurL, 1 PurQ and 2 PurS subunits.

Its subcellular location is the cytoplasm. The catalysed reaction is N(2)-formyl-N(1)-(5-phospho-beta-D-ribosyl)glycinamide + L-glutamine + ATP + H2O = 2-formamido-N(1)-(5-O-phospho-beta-D-ribosyl)acetamidine + L-glutamate + ADP + phosphate + H(+). The protein operates within purine metabolism; IMP biosynthesis via de novo pathway; 5-amino-1-(5-phospho-D-ribosyl)imidazole from N(2)-formyl-N(1)-(5-phospho-D-ribosyl)glycinamide: step 1/2. Part of the phosphoribosylformylglycinamidine synthase complex involved in the purines biosynthetic pathway. Catalyzes the ATP-dependent conversion of formylglycinamide ribonucleotide (FGAR) and glutamine to yield formylglycinamidine ribonucleotide (FGAM) and glutamate. The FGAM synthase complex is composed of three subunits. PurQ produces an ammonia molecule by converting glutamine to glutamate. PurL transfers the ammonia molecule to FGAR to form FGAM in an ATP-dependent manner. PurS interacts with PurQ and PurL and is thought to assist in the transfer of the ammonia molecule from PurQ to PurL. The sequence is that of Phosphoribosylformylglycinamidine synthase subunit PurL from Nitrobacter winogradskyi (strain ATCC 25391 / DSM 10237 / CIP 104748 / NCIMB 11846 / Nb-255).